A 228-amino-acid polypeptide reads, in one-letter code: Protein SVP26 (228 aa).

Residue methionine 1 is a topological domain, cytoplasmic. A helical transmembrane segment spans residues 2–22; that stretch reads LLELISYAGTVSGFLFLTLSI. Topologically, residues 23–42 are lumenal; sequence ASGLYYISELVEEHTEPTRR. Residues 43-59 traverse the membrane as a helical segment; the sequence is FLTRAIYGIILILILLL. Residues 60-88 lie on the Cytoplasmic side of the membrane; sequence LLDGFPFKLTLFSIACYIVYYQNLKSFPF. A helical membrane pass occupies residues 89-105; the sequence is ISLTSPTFLLSCVCVVL. Residues 106-142 are Lumenal-facing; it reads NHYFWFKYFNDTEVPPQFKFDPNYIPRRRASFAEVAS. A glycan (N-linked (GlcNAc...) asparagine) is linked at asparagine 115. Residues 143-166 form a helical membrane-spanning segment; that stretch reads FFGICVWFIPFALFVSLSAGDYVL. Over 167–228 the chain is Cytoplasmic; that stretch reads PTTSEQHMAK…IEPDFDRLAV (62 aa).

The protein belongs to the SVP26 family. Interacts with itself. Interacts with KTR3, MNN2 and MNN5. N-glycosylated.

The protein localises to the golgi apparatus. The protein resides in the cis-Golgi network membrane. Functionally, plays a role in retention of a subset of membrane proteins in the early Golgi compartments. Facilitates endoplasmic reticulum to Golgi transport of mannosyltransferases MNN2 and MNN5. This chain is Protein SVP26 (SVP26), found in Saccharomyces cerevisiae (strain ATCC 204508 / S288c) (Baker's yeast).